A 373-amino-acid chain; its full sequence is Chaperone protein DnaJ (373 aa).

Positions aspartate 5–glycine 70 constitute a J domain. A CR-type zinc finger spans residues glycine 134 to valine 212. The Zn(2+) site is built by cysteine 147, cysteine 150, cysteine 164, cysteine 167, cysteine 186, cysteine 189, cysteine 200, and cysteine 203. CXXCXGXG motif repeat units follow at residues cysteine 147–glycine 154, cysteine 164–glycine 171, cysteine 186–glycine 193, and cysteine 200–glycine 207.

It belongs to the DnaJ family. As to quaternary structure, homodimer. The cofactor is Zn(2+).

The protein resides in the cytoplasm. Its function is as follows. Participates actively in the response to hyperosmotic and heat shock by preventing the aggregation of stress-denatured proteins and by disaggregating proteins, also in an autonomous, DnaK-independent fashion. Unfolded proteins bind initially to DnaJ; upon interaction with the DnaJ-bound protein, DnaK hydrolyzes its bound ATP, resulting in the formation of a stable complex. GrpE releases ADP from DnaK; ATP binding to DnaK triggers the release of the substrate protein, thus completing the reaction cycle. Several rounds of ATP-dependent interactions between DnaJ, DnaK and GrpE are required for fully efficient folding. Also involved, together with DnaK and GrpE, in the DNA replication of plasmids through activation of initiation proteins. The protein is Chaperone protein DnaJ of Neisseria gonorrhoeae (strain ATCC 700825 / FA 1090).